Reading from the N-terminus, the 340-residue chain is 4-hydroxythreonine-4-phosphate dehydrogenase (340 aa).

Substrate contacts are provided by histidine 141 and threonine 142. 3 residues coordinate a divalent metal cation: histidine 171, histidine 216, and histidine 271. Substrate contacts are provided by lysine 279, asparagine 288, and arginine 297.

Belongs to the PdxA family. As to quaternary structure, homodimer. Requires Zn(2+) as cofactor. The cofactor is Mg(2+). Co(2+) serves as cofactor.

It localises to the cytoplasm. It carries out the reaction 4-(phosphooxy)-L-threonine + NAD(+) = 3-amino-2-oxopropyl phosphate + CO2 + NADH. It functions in the pathway cofactor biosynthesis; pyridoxine 5'-phosphate biosynthesis; pyridoxine 5'-phosphate from D-erythrose 4-phosphate: step 4/5. In terms of biological role, catalyzes the NAD(P)-dependent oxidation of 4-(phosphooxy)-L-threonine (HTP) into 2-amino-3-oxo-4-(phosphooxy)butyric acid which spontaneously decarboxylates to form 3-amino-2-oxopropyl phosphate (AHAP). The protein is 4-hydroxythreonine-4-phosphate dehydrogenase of Desulforapulum autotrophicum (strain ATCC 43914 / DSM 3382 / VKM B-1955 / HRM2) (Desulfobacterium autotrophicum).